We begin with the raw amino-acid sequence, 302 residues long: MTRKNNALPKARTLIEALPWLTRHHGKTIVVKFGGNAMVNEELKGAFARPSFLVHHAGLRPVVVHGGGPQISAELDRYGLVSEFKAGLRVTTDEAMDVVRMVLAGQVQRDVWGCSIVHGPLAVGITGEDAHPISATRHRPLIDGEPVDIGRVGEVTRIDTGAVLALLEDGRIPVVSSIARAEDDGHVYNVNADTAAAALAAALGAETLMVLTDVEGLYEDWPNSDEVISRLTASELETLLPDLSSGMVPKMEGCLHAVRNGVRTARVIDGRVPHSILLEIFTDDGVGTMVVPDEPSVSEGTS.

Substrate is bound by residues 67 to 68 (GG), arginine 89, and asparagine 189.

This sequence belongs to the acetylglutamate kinase family. ArgB subfamily.

It localises to the cytoplasm. The catalysed reaction is N-acetyl-L-glutamate + ATP = N-acetyl-L-glutamyl 5-phosphate + ADP. It participates in amino-acid biosynthesis; L-arginine biosynthesis; N(2)-acetyl-L-ornithine from L-glutamate: step 2/4. In terms of biological role, catalyzes the ATP-dependent phosphorylation of N-acetyl-L-glutamate. This Streptomyces clavuligerus protein is Acetylglutamate kinase.